Consider the following 82-residue polypeptide: MAQAGSENKEPWNEETRAKFEGKSRSEYLDPCQEAAQRSIRCLHRNQGDRTMCSDYFEAYRECKKQWIERRREQKRKAGALF.

The segment at 1 to 27 (MAQAGSENKEPWNEETRAKFEGKSRSE) is disordered. Basic and acidic residues predominate over residues 7–27 (ENKEPWNEETRAKFEGKSRSE). A CHCH domain is found at 29–71 (LDPCQEAAQRSIRCLHRNQGDRTMCSDYFEAYRECKKQWIERR). 2 short sequence motifs (cx9C motif) span residues 32 to 42 (CQEAAQRSIRC) and 53 to 63 (CSDYFEAYREC). Intrachain disulfides connect Cys32-Cys63 and Cys42-Cys53.

This sequence belongs to the COX23 family.

The protein localises to the mitochondrion intermembrane space. In terms of biological role, required for the assembly of cytochrome c oxidase. The sequence is that of Cytochrome c oxidase-assembly factor cox-23, mitochondrial (cox-23) from Neurospora crassa (strain ATCC 24698 / 74-OR23-1A / CBS 708.71 / DSM 1257 / FGSC 987).